Consider the following 393-residue polypeptide: Chalcone synthase 3 (393 aa).

Residue Cys-166 is part of the active site.

This sequence belongs to the thiolase-like superfamily. Chalcone/stilbene synthases family.

It catalyses the reaction (E)-4-coumaroyl-CoA + 3 malonyl-CoA + 3 H(+) = 2',4,4',6'-tetrahydroxychalcone + 3 CO2 + 4 CoA. The protein operates within secondary metabolite biosynthesis; flavonoid biosynthesis. In terms of biological role, the primary product of this enzyme is 4,2',4',6'-tetrahydroxychalcone (also termed naringenin-chalcone or chalcone) which can under specific conditions spontaneously isomerize into naringenin. The polypeptide is Chalcone synthase 3 (CHS3) (Ruta graveolens (Common rue)).